Here is a 990-residue protein sequence, read N- to C-terminus: MRAGLSTIQQTLTPEAATVLNQSIAEAARRNHGQTTPLHVAATLLASPAGFLRRACIRSHPNSSHPLQCRALELCFSVALERLPTATTTPGNDPPISNALMAALKRAQAHQRRGCPEQQQQPLLAVKVELEQLIISILDDPSVSRVMREASFSSPAVKATIEQSLNNSVTPTPIPSVSSVGLNFRPGGGGPMTRNSYLNPRLQQNASSVQSGVSKNDDVERVMDILGRAKKKNPVLVGDSEPGRVIREILKKIEVGEVGNLAVKNSKVVSLEEISSDKALRIKELDGLLQTRLKNSDPIGGGGVILDLGDLKWLVEQPSSTQPPATVAVEIGRTAVVELRRLLEKFEGRLWFIGTATCETYLRCQVYHPSVETDWDLQAVSVAAKAPASGVFPRLANNLESFTPLKSFVPANRTLKCCPQCLQSYERELAEIDSVSSPEVKSEVAQPKQLPQWLLKAKPVDRLPQAKIEEVQKKWNDACVRLHPSFHNKNERIVPIPVPITLTTSPYSPNMLLRQPLQPKLQPNRELRERVHLKPMSPLVAEQAKKKSPPGSPVQTDLVLGRAEDSEKAGDVQVRDFLGCISSESVQNNNNISVLQKENLGNSLDIDLFKKLLKGMTEKVWWQNDAAAAVAATVSQCKLGNGKRRGVLSKGDVWLLFSGPDRVGKRKMVSALSSLVYGTNPIMIQLGSRQDAGDGNSSFRGKTALDKIAETVKRSPFSVILLEDIDEADMLVRGSIKQAMDRGRIRDSHGREISLGNVIFVMTASWHFAGTKTSFLDNEAKLRDLASESWRLRLCMREKFGKRRASWLCSDEERLTKPKKEHGSGLSFDLNQAADTDDGSHNTSDLTTDNDQDEQGFSGKLSLQCVPFAFHDMVSRVDDAVAFRAVDFAAVRRRITETLSERFETIIGESLSVEVEEEALQRILSGVWLGQTELEEWIEKAIVPVLSQLKARVSSSGTYGDCTVARLELDEDSGERNAGDLLPTTITLAV.

The Clp R domain maps to isoleucine 8–asparagine 167. 2 repeat regions span residues leucine 12 to leucine 83 and isoleucine 96 to asparagine 167. Residues proline 818 to glutamine 855 form a disordered region. Residues phenylalanine 828–glutamine 832 carry the EAR motif.

Belongs to the ClpA/ClpB family. As to quaternary structure, interacts probably with TPL/TPR in an EAR-motif dependent manner. Interacts with TPL, TPR1, TPR2 and TPR4. In terms of tissue distribution, highly expressed in dry seeds. Expressed in seedlings, rosette leaves and senescing leaves. Detected in roots and axillary shoots. Expressed in the primary rosette buds and expanding leaves of adult rosettes, the vasculature of the hypocotyls, cotyledons, and mature roots, in the midvein and petioles of young leaves, the young leaf periphery, stomata, and the root caps.

Probable component of a transcriptional corepressor complex that acts downstream of MAX2 to negatively regulate karrikins/strigolactone responses. Probable target of MAX2 during germination and seedling photomorphogenesis. Acts probably specifically in the karrikin pathway. The polypeptide is Protein SUPPRESSOR OF MAX2 1 (Arabidopsis thaliana (Mouse-ear cress)).